A 629-amino-acid chain; its full sequence is MSTTLKNAAHLSESAQVDSGSVQPFTRSQKIYVQGSRPDIRVPMREITLDVTPTDFGGEINAPVTVYDTSGPYTDPNVIIDVRKGLADVRSPWIDSRNDTERLAGLSSNFGQQRLSDAELTALRFAHVRNPRRANAGANVSQMHYARQGIITAEMEYVAIRENMKLQEARAAGLRTQQNAGHSFGASIPKEITAEFVREEIARGRAIIPANINHVELEPMIIGRNFLVKINGNIGNSALGSSIEEEVAKLTWGIRWGSDTVMDLSTGKHIHETREWIIRNSPVPIGTVPIYQALEKVGGAAEDLTWELFRDTLIEQAEQGVDYFTIHAGVLLRYVPLTAKRVTGIVSRGGSIMAKWCLAHHQENFLYTHFEDICEIMKAYDVSFSLGDGLRPGSIADANDAAQFGELETLGELTKIAWKHDVQTMIEGPGHVPMQLIKENMDKQLECCDEAPFYTLGPLTTDIAPGYDHITSGIGAAMIGWFGCAMLCYVTPKEHLGLPNKDDVKTGIITYKIAAHAADLAKGHPGAQIRDNALSKARFEFRWEDQFNLGLDPDTARSYHDETLPKDSAKVAHFCSMCGPKFCSMKITQEVREYAANQRIEAVDVDVAKGLAEQAERFKQEGSQLYKKV.

Residues 1 to 20 are disordered; it reads MSTTLKNAAHLSESAQVDSG. Substrate is bound by residues asparagine 233, methionine 262, tyrosine 291, histidine 327, 347–349, 388–391, and glutamate 427; these read SRG and DGLR. A Zn(2+)-binding site is contributed by histidine 431. Tyrosine 454 lines the substrate pocket. Histidine 495 is a Zn(2+) binding site. The [4Fe-4S] cluster site is built by cysteine 575, cysteine 578, and cysteine 583.

This sequence belongs to the ThiC family. As to quaternary structure, homodimer. It depends on [4Fe-4S] cluster as a cofactor.

The enzyme catalyses 5-amino-1-(5-phospho-beta-D-ribosyl)imidazole + S-adenosyl-L-methionine = 4-amino-2-methyl-5-(phosphooxymethyl)pyrimidine + CO + 5'-deoxyadenosine + formate + L-methionine + 3 H(+). It functions in the pathway cofactor biosynthesis; thiamine diphosphate biosynthesis. Functionally, catalyzes the synthesis of the hydroxymethylpyrimidine phosphate (HMP-P) moiety of thiamine from aminoimidazole ribotide (AIR) in a radical S-adenosyl-L-methionine (SAM)-dependent reaction. The sequence is that of Phosphomethylpyrimidine synthase from Pseudomonas savastanoi pv. phaseolicola (strain 1448A / Race 6) (Pseudomonas syringae pv. phaseolicola (strain 1448A / Race 6)).